We begin with the raw amino-acid sequence, 1319 residues long: Son of sevenless homolog 1 (1319 aa).

The 191-residue stretch at 200–390 (TYYDLVKAFM…LNVQSGMEKI (191 aa)) folds into the DH domain. Positions 444–548 (FIMEGTLTRV…AALISLQYRS (105 aa)) constitute a PH domain. The N-terminal Ras-GEF domain maps to 597–741 (GIPIIKAGTV…SITKIIQRKK (145 aa)). Residues 780 to 1019 (HPIEIARQLT…FNKSLEIEPR (240 aa)) form the Ras-GEF domain. The segment at 1019–1101 (RHPKPLPRFP…ASGTSSNTDV (83 aa)) is disordered. Phosphoserine is present on residues Ser-1078 and Ser-1082. Phosphoserine; by RPS6KA3 occurs at positions 1120 and 1147. Residues 1121–1319 (VSSISLSKGT…PPLLENAHSS (199 aa)) are disordered. Ser-1164, Ser-1196, and Ser-1215 each carry phosphoserine. Over residues 1194-1203 (PESPPLLPPR) the composition is skewed to pro residues. Positions 1238–1250 (SPSPFTPPPPQTP) are enriched in pro residues. Phosphoserine is present on Ser-1261. The segment covering 1296–1309 (YKREHTHPSMHRDG) has biased composition (basic and acidic residues).

Interacts (via C-terminus) with GRB2 (via SH3 domain). Forms a complex with phosphorylated MUC1 and GRB2 (via its SH3 domains). Interacts with phosphorylated LAT2. Interacts with NCK1 and NCK2. Part of a complex consisting of ABI1, EPS8 and SOS1. Interacts (Ser-1120 and Ser-1147 phosphorylated form) with YWHAB and YWHAE. In terms of processing, phosphorylation at Ser-1120 and Ser-1147 by RPS6KA3 create YWHAB and YWHAE binding sites and which contribute to the negative regulation of EGF-induced MAPK1/3 phosphorylation. Expressed in most embryonic and adult tissues.

Its function is as follows. Promotes the exchange of Ras-bound GDP by GTP. Probably by promoting Ras activation, regulates phosphorylation of MAP kinase MAPK3 in response to EGF. Catalytic component of a trimeric complex that participates in transduction of signals from Ras to Rac by promoting the Rac-specific guanine nucleotide exchange factor (GEF) activity. This is Son of sevenless homolog 1 (Sos1) from Mus musculus (Mouse).